A 303-amino-acid chain; its full sequence is MQKFDTRTFQGLILTLQDYWARQGCTIVQPLDMEVGAGTSHPMTCLRALGPEPMAAAYVQPSRRPTDGRYGENPNRLQHYYQFQVVIKPSPDNIQELYLGSLKELGMDPTIHDIRFVEDNWENPTLGAWGLGWEVWLNGMEVTQFTYFQQVGGLECKPVTGEITYGLERLAMYIQGVDSVYDLVWSDGPLGKTTYGDVFHQNEVEQSTYNFEYADVDFLFTCFEQYEKEAQQLLALENPLPLPAYERILKAAHSFNLLDARKAISVTERQRYILRIRTLTKAVAEAYYASREALGFPMCNKDK.

This sequence belongs to the class-II aminoacyl-tRNA synthetase family. In terms of assembly, tetramer of two alpha and two beta subunits.

It localises to the cytoplasm. It catalyses the reaction tRNA(Gly) + glycine + ATP = glycyl-tRNA(Gly) + AMP + diphosphate. The polypeptide is Glycine--tRNA ligase alpha subunit (Escherichia fergusonii (strain ATCC 35469 / DSM 13698 / CCUG 18766 / IAM 14443 / JCM 21226 / LMG 7866 / NBRC 102419 / NCTC 12128 / CDC 0568-73)).